A 116-amino-acid chain; its full sequence is UPF0102 protein IL0423 (116 aa).

Belongs to the UPF0102 family.

The protein is UPF0102 protein IL0423 of Idiomarina loihiensis (strain ATCC BAA-735 / DSM 15497 / L2-TR).